A 490-amino-acid polypeptide reads, in one-letter code: MSDRLNDQAQHRLQKLLRLKQTNNDPYLVTKTSLTHSSKSFQVEFEKCSEEELKKKATVSLAGRIIAIRQTFLIIQDFDGQVQLYINKKIHPKLFDYFNEFVDIGDQIVVSGKPMLTKTKVLTLAVEEMKIIAKCLLVPPEKWHGLTDIETRARKRFLDLTYNLAMRDVFLKRTKIIKSIRSFLDQNGFIEVETPTLQAVLGGANAKPFKTHYNALKADFYLRIANEIALKKLIIGGFNKVYEMGKMFRNEGVDTTHNPEFTSIEIYQAYADFEVMLVLVEKLIQSLCESLNQFSFNWNNKTINLKTPFHKITMVELIKKVTGIDFNSVKDDQSAILLAEKHHVKLAKHQQNKQHIINLFFEQFCEQTLIEPTFVTHYPKAVSPLAKQDPSNPEFTQRFELFINGKEIANAYSELNDPLEQRKRFEQQLEEKQLGNDETSELDESFLEALSFGMVNTAGLGIGIDRLVMLLCECNSIRDVVFFPQLREHK.

Mg(2+)-binding residues include Glu400 and Glu407.

It belongs to the class-II aminoacyl-tRNA synthetase family. In terms of assembly, homodimer. Requires Mg(2+) as cofactor.

It is found in the cytoplasm. The enzyme catalyses tRNA(Lys) + L-lysine + ATP = L-lysyl-tRNA(Lys) + AMP + diphosphate. This chain is Lysine--tRNA ligase (lysS), found in Mycoplasma genitalium (strain ATCC 33530 / DSM 19775 / NCTC 10195 / G37) (Mycoplasmoides genitalium).